Consider the following 515-residue polypeptide: Maturase K (515 aa).

The protein belongs to the intron maturase 2 family. MatK subfamily.

It is found in the plastid. Its subcellular location is the chloroplast. In terms of biological role, usually encoded in the trnK tRNA gene intron. Probably assists in splicing its own and other chloroplast group II introns. The protein is Maturase K of Picea engelmannii (Engelmann's spruce).